A 350-amino-acid chain; its full sequence is D-alanine--D-alanine ligase (350 aa).

One can recognise an ATP-grasp domain in the interval 134-337 (KIFAAQRGVK…LPKKHSIKVS (204 aa)). Residue 160 to 212 (IAYPIILKPARLGSSIGVSVINEEKELDYGRDLAFEYDDTIIAESFKSGVKEY) participates in ATP binding. Residues Asp-289, Glu-301, and Asn-303 each contribute to the Mg(2+) site.

Belongs to the D-alanine--D-alanine ligase family. The cofactor is Mg(2+). It depends on Mn(2+) as a cofactor.

The protein resides in the cytoplasm. The enzyme catalyses 2 D-alanine + ATP = D-alanyl-D-alanine + ADP + phosphate + H(+). It participates in cell wall biogenesis; peptidoglycan biosynthesis. Functionally, cell wall formation. This chain is D-alanine--D-alanine ligase, found in Helicobacter hepaticus (strain ATCC 51449 / 3B1).